The primary structure comprises 242 residues: Eukaryotic translation initiation factor 4E type 1B (242 aa).

The disordered stretch occupies residues 1-42; sequence MLAVEVSEAEGGIREWEEEEKEEEAAERTPTGEKSPNSPRTL. Residues 16 to 25 are compositionally biased toward acidic residues; the sequence is WEEEEKEEEA. The segment covering 32–41 has biased composition (polar residues); the sequence is GEKSPNSPRT. The segment at 62–65 is EIF4EBP1/2/3 binding; sequence HPLQ. Residue 81 to 82 participates in mRNA binding; the sequence is WQ. Positions 98–102 are EIF4EBP1/2/3 binding; that stretch reads WALYS. 127–128 contributes to the mRNA binding site; that stretch reads WE. Positions 157–164 are EIF4EBP1/2/3 binding; that stretch reads ETLLCLIG. Residues 182–187 and 230–232 contribute to the mRNA site; these read RTKGDK and TKS.

Belongs to the eukaryotic initiation factor 4E family. In terms of assembly, eIF4F is a multi-subunit complex, the composition of which varies with external and internal environmental conditions. It is composed of at least EIF4A, EIF4E and EIF4G.

In terms of biological role, recognizes and binds the 7-methylguanosine-containing mRNA cap during an early step in the initiation of protein synthesis and facilitates ribosome binding by inducing the unwinding of the mRNAs secondary structure. In Homo sapiens (Human), this protein is Eukaryotic translation initiation factor 4E type 1B (EIF4E1B).